An 84-amino-acid polypeptide reads, in one-letter code: Small ribosomal subunit protein uS17 (84 aa).

Belongs to the universal ribosomal protein uS17 family. As to quaternary structure, part of the 30S ribosomal subunit.

One of the primary rRNA binding proteins, it binds specifically to the 5'-end of 16S ribosomal RNA. The polypeptide is Small ribosomal subunit protein uS17 (Aliivibrio salmonicida (strain LFI1238) (Vibrio salmonicida (strain LFI1238))).